A 589-amino-acid chain; its full sequence is uncharacterized protein (589 aa).

Residues 242-314 enclose the RRM domain; the sequence is TALEVRNIPE…RFIKIFWYNP (73 aa). 3 disordered regions span residues 322–348, 443–465, and 566–589; these read PKKFASHKSPTTSDSSNVESSEDVDPA, ESPAASNGSHHPYASGLPQRGTN, and TSMETGESNTSDNMNIEVEEGRWR. A Phosphoserine modification is found at Ser-330. The span at 330-340 shows a compositional bias: low complexity; sequence SPTTSDSSNVE. Thr-332 carries the phosphothreonine modification. A Phosphoserine modification is found at Ser-334. The segment covering 566 to 579 has biased composition (polar residues); sequence TSMETGESNTSDNM.

It is found in the nucleus. This is an uncharacterized protein from Schizosaccharomyces pombe (strain 972 / ATCC 24843) (Fission yeast).